The primary structure comprises 878 residues: Enoyl-CoA isomerase/hydratase claC (878 aa).

Residues 541–561 (VGPASTEATSPVVEPSTMESD) form a disordered region. Residues 677 to 681 (AGADL) and glycine 724 each bind substrate.

The protein belongs to the enoyl-CoA hydratase/isomerase family.

It participates in secondary metabolite biosynthesis. Enoyl-CoA isomerase/hydratase; part of the cla gene cluster that produces clavatol and ortho-quinone methide. The clavatol biosynthesis cluster cla and the terrestric acid cluster tra are both involved in the production of peniphenones and penilactones. The non-reducing PKS claF is responsible for the formation of clavatol from successive condensations of 3 malonyl-CoA units, presumably with a simple acetyl-CoA starter unit, and 2 methylation steps. The esterase claE probably collaborates with claF by catalyzing the hydrolysis of ACP-bound acyl intermediates to free the ACP from stalled intermediates. The clavatol oxidase claD then converts clavatol to hydroxyclavatol. Spontaneous dehydration of hydroxyclavatol leads to the accumulation of the highly active ortho-quinone methide. On the other hand, the PKS-NRPS hybrid traA is involved in the formation of crustosic acid, with the help of traB and traD. The polyketide synthase module (PKS) of traA is responsible for the synthesis of the polyketide backbone via the condensation of an acetyl-CoA starter unit with 3 malonyl-CoA units. The downstream nonribosomal peptide synthetase (NRPS) module then amidates the carboxyl end of the polyketide with L-malic acid. Because traA lacks a designated enoylreductase (ER) domain, the required activity is provided the enoyl reductase traG. Crustosic acid undergoes decarboxylation and isomerization to the terrestric acid, catalyzed by the 2-oxoglutarate-dependent dioxygenase traH. Both acids are further converted to the 2 gamma-butyrolactones (R)-5-methyltetronic acid and (S)-5-carboxylmethyltetronic acid, with involvement of the cytochrome P450 monooxygenase claJ. Spontaneous addition of the methide to these gamma-butyrolactones leads to peniphenone D and penilactone D, which undergo again stereospecific attacking by methide to give penilactones A and B. The function of the enoyl-CoA isomerase/hydratase claC has not been investigated yet. This chain is Enoyl-CoA isomerase/hydratase claC, found in Penicillium crustosum (Blue mold fungus).